A 359-amino-acid polypeptide reads, in one-letter code: MQLDTISFNNPLNSETSEDTTKLPFTLGDLKAAIPAECFQPNVTKSLFYFFRDILIIGLLYAVASYLDSWLFFPIFWLMQGTMFWALFVVGHDCGHQSFSKQKWLNDLIGHLSHTPILVPYHGWRISHRTHHKNTGNIDNDESWYPVTESQYKDMPLAQKIGRYYVFLLAYPVYLFKRSPNKEGSHFLPSSSLFKPSEKWDVLTSTVLLIGMVGLLGFLTYQWGWMWLLKYYAVPYLVFIVWLDLVTFLHHTEPELPWYRGEDWTFLKGAISSIDRDYGLVYHIHHDIGTHVAHHIFLNIPHYNLLKATEAIKPVMGEYFHKSEEPIWKSLWNSCISCHFVPDTGSKVYYTSKNKSAKA.

Residues 1 to 15 (MQLDTISFNNPLNSE) show a composition bias toward polar residues. A disordered region spans residues 1-20 (MQLDTISFNNPLNSETSEDT). The next 2 helical transmembrane spans lie at 47–67 (LFYFFRDILIIGLLYAVASYL) and 70–90 (WLFFPIFWLMQGTMFWALFVV). The Histidine box-1 signature appears at 92 to 96 (HDCGH). Residues 128–132 (HRTHH) carry the Histidine box-2 motif. 2 helical membrane-spanning segments follow: residues 207 to 227 (VLLIGMVGLLGFLTYQWGWMW) and 228 to 248 (LLKYYAVPYLVFIVWLDLVTF). The Histidine box-3 motif lies at 294–298 (HHIFL).

It belongs to the fatty acid desaturase type 2 family. Fe(2+) serves as cofactor.

It is found in the membrane. It carries out the reaction a 1-[(9Z,12Z)-octadecdienoyl]-2-acyl-glycerolipid + 2 reduced [2Fe-2S]-[ferredoxin] + O2 + 2 H(+) = a 1-[(9Z,12Z,15Z)-octadectrienoyl]-2-acyl-glycerolipid + 2 oxidized [2Fe-2S]-[ferredoxin] + 2 H2O. It catalyses the reaction a 1-[(6Z,9Z,12Z)-octadectrienoyl]-2-acyl-glycerolipid + 2 reduced [2Fe-2S]-[ferredoxin] + O2 + 2 H(+) = a 1-[(6Z,9Z,12Z,15Z)-octadectetraenoyl]-2-acyl-glycerolipid + 2 oxidized [2Fe-2S]-[ferredoxin] + 2 H2O. Its pathway is lipid metabolism; polyunsaturated fatty acid biosynthesis. Functionally, desaturase involved in fatty acid biosynthesis. Introduces a double bond at carbon 15 of linoleoyl and gamma-linolenoyl groups attached to the sn-1 position of the glycerol moiety of membrane glycerolipids. This Nostoc sp. (strain 36) protein is sn-1 acyl-lipid omega-3 desaturase (ferredoxin).